Consider the following 155-residue polypeptide: Vasotocin-neurophysin VT 2 (155 aa).

The first 20 residues, 1–20 (MSVCAVLLLCVAGLLCLSSA), serve as a signal peptide directing secretion. Cysteines 21 and 26 form a disulfide. Position 29 is a glycine amide (Gly-29). Disulfide bonds link Cys-42–Cys-86, Cys-45–Cys-59, Cys-53–Cys-76, Cys-60–Cys-66, Cys-93–Cys-106, Cys-100–Cys-118, and Cys-107–Cys-112. Acidic residues predominate over residues 119-128 (SEDSESEEPA). The interval 119-139 (SEDSESEEPADQNTLGASPGE) is disordered.

This sequence belongs to the vasopressin/oxytocin family.

It localises to the secreted. Functionally, vasotocin is an antidiuretic hormone. This Catostomus commersonii (White sucker) protein is Vasotocin-neurophysin VT 2.